The following is a 124-amino-acid chain: Fluoride-specific ion channel FluC (124 aa).

4 helical membrane-spanning segments follow: residues 4 to 24 (YLVI…TGVY), 36 to 56 (GTLI…ILFL), 63 to 83 (PLWR…LSSI), and 100 to 120 (LLNI…GIVL). 2 residues coordinate Na(+): Gly75 and Thr78.

The protein belongs to the fluoride channel Fluc/FEX (TC 1.A.43) family.

It is found in the cell inner membrane. The enzyme catalyses fluoride(in) = fluoride(out). Na(+) is not transported, but it plays an essential structural role and its presence is essential for fluoride channel function. Its function is as follows. Fluoride-specific ion channel. Important for reducing fluoride concentration in the cell, thus reducing its toxicity. The polypeptide is Fluoride-specific ion channel FluC (Sulfurihydrogenibium sp. (strain YO3AOP1)).